A 314-amino-acid polypeptide reads, in one-letter code: tRNA pseudouridine synthase B (314 aa).

Histidine 43 is a substrate binding site. Residue aspartate 48 is the Nucleophile of the active site. Residues tyrosine 76, tyrosine 179, and leucine 200 each coordinate substrate.

The protein belongs to the pseudouridine synthase TruB family. Type 1 subfamily.

It carries out the reaction uridine(55) in tRNA = pseudouridine(55) in tRNA. Its function is as follows. Responsible for synthesis of pseudouridine from uracil-55 in the psi GC loop of transfer RNAs. In Salmonella paratyphi B (strain ATCC BAA-1250 / SPB7), this protein is tRNA pseudouridine synthase B.